A 61-amino-acid chain; its full sequence is Large ribosomal subunit protein bL32 (61 aa).

Residues 1-22 (MAVPKKKTSRARRDRRRSHHAL) show a composition bias toward basic residues. A disordered region spans residues 1-24 (MAVPKKKTSRARRDRRRSHHALRG).

Belongs to the bacterial ribosomal protein bL32 family.

The chain is Large ribosomal subunit protein bL32 from Rubrobacter xylanophilus (strain DSM 9941 / JCM 11954 / NBRC 16129 / PRD-1).